A 524-amino-acid polypeptide reads, in one-letter code: Phenylalanine--tRNA ligase alpha subunit (524 aa).

L-phenylalanine contacts are provided by threonine 362, tyrosine 441, and phenylalanine 467.

The protein belongs to the class-II aminoacyl-tRNA synthetase family. Phe-tRNA synthetase alpha subunit type 2 subfamily. As to quaternary structure, tetramer of two alpha and two beta subunits. Mg(2+) is required as a cofactor.

The protein localises to the cytoplasm. It catalyses the reaction tRNA(Phe) + L-phenylalanine + ATP = L-phenylalanyl-tRNA(Phe) + AMP + diphosphate + H(+). The protein is Phenylalanine--tRNA ligase alpha subunit of Methanopyrus kandleri (strain AV19 / DSM 6324 / JCM 9639 / NBRC 100938).